The following is a 363-amino-acid chain: Molybdenum import ATP-binding protein ModC (363 aa).

In terms of domain architecture, ABC transporter spans 1 to 230; the sequence is MISARFSGRQ…PNLPLIHRPD (230 aa). An ATP-binding site is contributed by 31–38; sequence GPSGCGKT. One can recognise a Mop domain in the interval 289 to 359; the sequence is DTTILNALPA…LKAMALSAPA (71 aa).

It belongs to the ABC transporter superfamily. Molybdate importer (TC 3.A.1.8) family. In terms of assembly, the complex is composed of two ATP-binding proteins (ModC), two transmembrane proteins (ModB) and a solute-binding protein (ModA).

It localises to the cell inner membrane. The enzyme catalyses molybdate(out) + ATP + H2O = molybdate(in) + ADP + phosphate + H(+). Its function is as follows. Part of the ABC transporter complex ModABC involved in molybdenum import. Responsible for energy coupling to the transport system. This is Molybdenum import ATP-binding protein ModC from Rhodobacter capsulatus (Rhodopseudomonas capsulata).